Consider the following 489-residue polypeptide: Putative general negative regulator of transcription C16C9.04c (489 aa).

Residues 18 to 61 (CPLCMEEIDISDKNFKPCQCGYRVCRFCWHHIKEDLNGRCPACR) form an RING-type zinc finger. Residues 76-109 (AEEWKMDLHRKNERKKREKERKEVELSNRKHLAN) are a coiled coil. An RRM domain is found at 116 to 198 (NLAYVNGLSP…VSDGRHLRAS (83 aa)). A C3H1-type zinc finger spans residues 199 to 226 (YGTTKYCTSYLRNQQCPNPSCMYLHEPG). Polar residues-rich tracts occupy residues 246-261 (LSTK…HSPS) and 466-479 (ENQP…NNGN). 2 disordered regions span residues 246–268 (LSTK…PFKT) and 458–489 (VPEQ…GFQS).

It is found in the nucleus. Its function is as follows. May negatively regulate the basal and activated transcription of many genes. In Schizosaccharomyces pombe (strain 972 / ATCC 24843) (Fission yeast), this protein is Putative general negative regulator of transcription C16C9.04c.